A 367-amino-acid polypeptide reads, in one-letter code: Leu/Ile/Val-binding protein (367 aa).

The N-terminal stretch at 1-23 (MNMKGKALLAGCIALSLSNMAFA) is a signal peptide. C76 and C101 are joined by a disulfide.

It belongs to the leucine-binding protein family.

The protein resides in the periplasm. In terms of biological role, this protein is a component of the leucine, isoleucine, valine, (threonine) transport system, which is one of the two periplasmic binding protein-dependent transport systems of the high-affinity transport of the branched-chain amino acids. The chain is Leu/Ile/Val-binding protein (livJ) from Citrobacter freundii.